The primary structure comprises 237 residues: Leucyl/phenylalanyl-tRNA--protein transferase (237 aa).

The protein belongs to the L/F-transferase family.

Its subcellular location is the cytoplasm. The enzyme catalyses N-terminal L-lysyl-[protein] + L-leucyl-tRNA(Leu) = N-terminal L-leucyl-L-lysyl-[protein] + tRNA(Leu) + H(+). It carries out the reaction N-terminal L-arginyl-[protein] + L-leucyl-tRNA(Leu) = N-terminal L-leucyl-L-arginyl-[protein] + tRNA(Leu) + H(+). The catalysed reaction is L-phenylalanyl-tRNA(Phe) + an N-terminal L-alpha-aminoacyl-[protein] = an N-terminal L-phenylalanyl-L-alpha-aminoacyl-[protein] + tRNA(Phe). Functionally, functions in the N-end rule pathway of protein degradation where it conjugates Leu, Phe and, less efficiently, Met from aminoacyl-tRNAs to the N-termini of proteins containing an N-terminal arginine or lysine. This chain is Leucyl/phenylalanyl-tRNA--protein transferase, found in Aromatoleum aromaticum (strain DSM 19018 / LMG 30748 / EbN1) (Azoarcus sp. (strain EbN1)).